The sequence spans 478 residues: Glycogen synthase (478 aa).

An ADP-alpha-D-glucose-binding site is contributed by K15.

It belongs to the glycosyltransferase 1 family. Bacterial/plant glycogen synthase subfamily.

The catalysed reaction is [(1-&gt;4)-alpha-D-glucosyl](n) + ADP-alpha-D-glucose = [(1-&gt;4)-alpha-D-glucosyl](n+1) + ADP + H(+). The protein operates within glycan biosynthesis; glycogen biosynthesis. In terms of biological role, synthesizes alpha-1,4-glucan chains using ADP-glucose. In Lactococcus lactis subsp. lactis (strain IL1403) (Streptococcus lactis), this protein is Glycogen synthase.